A 1377-amino-acid chain; its full sequence is Pleckstrin homology-like domain family B member 1 (1377 aa).

At Ser-51 the chain carries Phosphoserine. The region spanning 64–125 is the FHA domain; the sequence is TVIGSAARDI…LTQGCMLCLG (62 aa). The residue at position 131 (Arg-131) is an Asymmetric dimethylarginine. Residues 150–187 are disordered; that stretch reads RAPGPPYSPVPAESESLVNGNHTPQTATRGPSACASHS. The segment covering 165-178 has biased composition (polar residues); the sequence is SLVNGNHTPQTATR. 3 positions are modified to phosphoserine: Ser-192, Ser-220, and Ser-223. 2 disordered regions span residues 211-334 and 370-535; these read AAGK…LTDS and GALS…GSFS. Residues 252–273 are compositionally biased toward low complexity; that stretch reads SPAFSPLSSPASSGSCASHSPS. Polar residues predominate over residues 288–303; that stretch reads RSSSYHLALQPPQSRP. The segment covering 309–322 has biased composition (basic and acidic residues); the sequence is ESPRLSRKGGHERP. Phosphoserine occurs at positions 324, 334, 381, 404, 430, 443, 461, 470, 489, and 501. A compositionally biased stretch (low complexity) spans 456–473; that stretch reads ELPPLSPSLSRRALSPLP. The segment covering 481–491 has biased composition (basic and acidic residues); the sequence is KLNREVAESPR. At Arg-512 the chain carries Omega-N-methylarginine. Phosphoserine occurs at positions 518 and 520. A Phosphothreonine modification is found at Thr-522. Residues Ser-533, Ser-539, Ser-551, Ser-555, Ser-563, Ser-578, and Ser-583 each carry the phosphoserine modification. Low complexity predominate over residues 653–663; that stretch reads PSRGLAGASGR. 3 disordered regions span residues 653 to 707, 936 to 1019, and 1119 to 1138; these read PSRG…APST, TGPA…GSLP, and SMETSISTGGNSACSPDNMS. Over residues 677 to 691 the composition is skewed to basic and acidic residues; that stretch reads ESMERSDEENLKEEC. Ser-678 carries the post-translational modification Phosphoserine. Residues 683–809 are a coiled coil; the sequence is DEENLKEECS…TETKLFEDLE (127 aa). Residues Ser-971 and Ser-1017 each carry the phosphoserine modification. Residues 971-992 are compositionally biased toward low complexity; it reads SPLPRTRSGPLPSSSGSSSSSS. The segment covering 1009 to 1018 has biased composition (polar residues); the sequence is LLTQNGTGSL. The stretch at 1144–1208 forms a coiled coil; sequence DMGKIEEMEK…ARRQQLVEKE (65 aa). Residues 1256–1370 enclose the PH domain; sequence SKVCRGYLVK…WMDVIVTGAE (115 aa).

The protein is Pleckstrin homology-like domain family B member 1 (PHLDB1) of Homo sapiens (Human).